The following is a 384-amino-acid chain: Sialyltransferase-like protein 3 (384 aa).

Topologically, residues 1–5 (MKRRH) are cytoplasmic. The chain crosses the membrane as a helical; Signal-anchor for type II membrane protein span at residues 6–26 (WSHPSCGLLLLVAVFCLLLVF). The Lumenal portion of the chain corresponds to 27-384 (RCSQLRHSGD…FRLPPVSFYR (358 aa)). Asn241 carries N-linked (GlcNAc...) asparagine glycosylation.

This sequence belongs to the glycosyltransferase 29 family.

It is found in the golgi apparatus membrane. Possesses sialyltransferase-like activity in vitro. Transfers sialic acid to the glycoprotein asialofetuin. The transferred sialic acid is linked to galactose of Gal-beta-1,3-GalNAc through alpha-2,6-linkage. This chain is Sialyltransferase-like protein 3, found in Oryza sativa subsp. indica (Rice).